Consider the following 314-residue polypeptide: Ketimine reductase mu-crystallin (314 aa).

Arginine 47 serves as a coordination point for 3,3',5-triiodo-L-thyronine. NADPH contacts are provided by aspartate 82, histidine 92, arginine 119, alanine 144, valine 146, glutamine 147, asparagine 168, arginine 169, threonine 170, asparagine 173, threonine 205, leucine 206, valine 226, and alanine 228. 3,3',5-triiodo-L-thyronine is bound at residue glutamate 257. NADPH is bound at residue serine 292.

The protein belongs to the ornithine cyclodeaminase/mu-crystallin family. As to quaternary structure, homodimer. Binds the thyroid hormone triiodothyronine (T3); T3 binding inhibits enzymatic activity. Expressed in neural tissues, muscle and kidney. Expressed in the inner ear.

Its subcellular location is the cytoplasm. The catalysed reaction is L-pipecolate + NADP(+) = Delta(1)-piperideine-2-carboxylate + NADPH + H(+). The enzyme catalyses L-pipecolate + NAD(+) = Delta(1)-piperideine-2-carboxylate + NADH + H(+). It catalyses the reaction L-proline + NADP(+) = 1-pyrroline-2-carboxylate + NADPH + H(+). It carries out the reaction L-proline + NAD(+) = 1-pyrroline-2-carboxylate + NADH + H(+). The catalysed reaction is (3R)-1,4-thiomorpholine-3-carboxylate + NAD(+) = 3,4-dehydrothiomorpholine-3-carboxylate + NADH + 2 H(+). The enzyme catalyses (3R)-1,4-thiomorpholine-3-carboxylate + NADP(+) = 3,4-dehydrothiomorpholine-3-carboxylate + NADPH + 2 H(+). It catalyses the reaction (S)-cystathionine ketimine + NADH + 2 H(+) = (3R,5S)-2,3,5,6,7-pentahydro-1,4-thiazepine-3,5-dicarboxylate + NAD(+). It carries out the reaction (S)-cystathionine ketimine + NADPH + 2 H(+) = (3R,5S)-2,3,5,6,7-pentahydro-1,4-thiazepine-3,5-dicarboxylate + NADP(+). The catalysed reaction is (R)-lanthionine ketimine + NADPH + 2 H(+) = (3R,5R)-1,4-thiomorpholine-3,5-dicarboxylate + NADP(+). The enzyme catalyses Delta(2)-thiazoline-2-carboxylate + NADPH + 2 H(+) = L-thiazolidine-2-carboxylate + NADP(+). Inhibited by thyroid hormones triiodothyronine (T3) and thyroxine (T4). In terms of biological role, catalyzes the NAD(P)H-dependent reduction of imine double bonds of a number of cyclic ketimine substrates, including sulfur-containing cyclic ketimines. Under physiological conditions, it efficiently catalyzes delta(1)-piperideine-2-carboxylate (P2C) and delta(1)-pyrroline-2-carboxylate (Pyr2C) reduction, suggesting a central role in lysine and glutamate metabolism. Additional substrates are delta(2)-thiazoline-2-carboxylate (T2C), 3,4-dehydrothiomorpholine-3-carboxylate (AECK), and (R)-lanthionine ketimine (LK) that is reduced at very low rate compared to other substrates. Also catalyzes the NAD(P)H-dependent reduction of (S)-cystathionine ketimine (CysK). This is Ketimine reductase mu-crystallin from Homo sapiens (Human).